We begin with the raw amino-acid sequence, 313 residues long: Olfactory receptor 8B3 (313 aa).

Residues 1–25 are Extracellular-facing; that stretch reads MLARNNSLVTEFILAGLTDHPEFQQ. Asparagine 5 carries an N-linked (GlcNAc...) asparagine glycan. The chain crosses the membrane as a helical span at residues 26–46; that stretch reads PLFFLFLVVYIVTMVGNLGLI. Residues 47-54 are Cytoplasmic-facing; the sequence is ILFGLNSH. The helical transmembrane segment at 55-75 threads the bilayer; that stretch reads LHTPMYYFLFNLSFIDLCYSS. Over 76–99 the chain is Extracellular; sequence VFTPKMLMNFVSKKNIISYVGCMT. Cysteine 97 and cysteine 189 are disulfide-bonded. Residues 100 to 120 form a helical membrane-spanning segment; sequence QLFFFLFFVISECYMLTSMAY. Topologically, residues 121–139 are cytoplasmic; it reads DRYVAICNPLLYKVTMSHQ. A helical membrane pass occupies residues 140 to 160; sequence VCSMLTFAAYIMGLAGATAHT. The Extracellular portion of the chain corresponds to 161 to 197; that stretch reads GCMLRLTFCSANIINHYLCDILPLLQLSCTSTYVNEV. A helical transmembrane segment spans residues 198 to 217; the sequence is VVLIVVGINIMVPSCTILIS. At 218-237 the chain is on the cytoplasmic side; sequence YVFIVTSILHIKSTQGRSKA. Residues 238 to 258 traverse the membrane as a helical segment; that stretch reads FSTCSSHVIALSLFFGSAAFM. Residues 259–270 are Extracellular-facing; it reads YIKYSSGSMEQG. The chain crosses the membrane as a helical span at residues 271-291; it reads KVSSVFYTNVVPMLNPLIYSL. The Cytoplasmic segment spans residues 292–313; that stretch reads RNKDVKVALRKALIKIQRRNIF.

The protein belongs to the G-protein coupled receptor 1 family.

Its subcellular location is the cell membrane. In terms of biological role, odorant receptor. In Homo sapiens (Human), this protein is Olfactory receptor 8B3 (OR8B3).